The sequence spans 205 residues: Probable DNA-binding protein (205 aa).

The disordered stretch occupies residues G140–G168.

The polypeptide is Probable DNA-binding protein (Homo sapiens (Human)).